We begin with the raw amino-acid sequence, 166 residues long: EAKDDLARLLRDYQDAMNVKLALDVEIATYRKLLEGEECRMSGECPSAVSISVVSSSSTTSASAGGFGGGYGGGVGVGGGARSGFGGGSGFGGGSGISGSSGFGGGSGSGFGGGSGFSGSSGFGGGSSGFGSGSGGRSGVSGGGLSSGSSRGGSVRFSQSSQRTSR.

The IF rod domain maps to 1–41 (EAKDDLARLLRDYQDAMNVKLALDVEIATYRKLLEGEECRM). A coil 2B region spans residues 1-41 (EAKDDLARLLRDYQDAMNVKLALDVEIATYRKLLEGEECRM). Residues 42 to 166 (SGECPSAVSI…FSQSSQRTSR (125 aa)) form a tail region. Residues 122-146 (GFGGGSSGFGSGSGGRSGVSGGGLS) show a composition bias toward gly residues. Residues 122–166 (GFGGGSSGFGSGSGGRSGVSGGGLSSGSSRGGSVRFSQSSQRTSR) are disordered. The span at 147 to 166 (SGSSRGGSVRFSQSSQRTSR) shows a compositional bias: low complexity.

This sequence belongs to the intermediate filament family. As to quaternary structure, heterotetramer of two type I and two type II keratins.

This is Keratin, type II cytoskeletal 68 kDa, component IB from Bos taurus (Bovine).